A 739-amino-acid polypeptide reads, in one-letter code: Phosphoribosylformylglycinamidine synthase subunit PurL (739 aa).

Residue His54 is part of the active site. The ATP site is built by Tyr57 and Lys96. Glu98 contributes to the Mg(2+) binding site. Substrate-binding positions include 99-102 (SHNH) and Arg121. His100 (proton acceptor) is an active-site residue. Position 122 (Asp122) interacts with Mg(2+). Position 245 (Gln245) interacts with substrate. Asp275 is a Mg(2+) binding site. 319–321 (ESQ) serves as a coordination point for substrate. ATP-binding residues include Asp504 and Gly541. Residue Asn542 participates in Mg(2+) binding. Ser544 lines the substrate pocket.

This sequence belongs to the FGAMS family. Monomer. Part of the FGAM synthase complex composed of 1 PurL, 1 PurQ and 2 PurS subunits.

It localises to the cytoplasm. The catalysed reaction is N(2)-formyl-N(1)-(5-phospho-beta-D-ribosyl)glycinamide + L-glutamine + ATP + H2O = 2-formamido-N(1)-(5-O-phospho-beta-D-ribosyl)acetamidine + L-glutamate + ADP + phosphate + H(+). Its pathway is purine metabolism; IMP biosynthesis via de novo pathway; 5-amino-1-(5-phospho-D-ribosyl)imidazole from N(2)-formyl-N(1)-(5-phospho-D-ribosyl)glycinamide: step 1/2. In terms of biological role, part of the phosphoribosylformylglycinamidine synthase complex involved in the purines biosynthetic pathway. Catalyzes the ATP-dependent conversion of formylglycinamide ribonucleotide (FGAR) and glutamine to yield formylglycinamidine ribonucleotide (FGAM) and glutamate. The FGAM synthase complex is composed of three subunits. PurQ produces an ammonia molecule by converting glutamine to glutamate. PurL transfers the ammonia molecule to FGAR to form FGAM in an ATP-dependent manner. PurS interacts with PurQ and PurL and is thought to assist in the transfer of the ammonia molecule from PurQ to PurL. The protein is Phosphoribosylformylglycinamidine synthase subunit PurL of Lactococcus lactis subsp. lactis (strain IL1403) (Streptococcus lactis).